We begin with the raw amino-acid sequence, 783 residues long: Endonuclease MutS2 (783 aa).

Residue 333–340 participates in ATP binding; sequence GPNTGGKT. The 76-residue stretch at 708 to 783 folds into the Smr domain; sequence IDLRGKNIEE…GLGATFIYLK (76 aa).

It belongs to the DNA mismatch repair MutS family. MutS2 subfamily. As to quaternary structure, homodimer. Binds to stalled ribosomes, contacting rRNA.

In terms of biological role, endonuclease that is involved in the suppression of homologous recombination and thus may have a key role in the control of bacterial genetic diversity. Acts as a ribosome collision sensor, splitting the ribosome into its 2 subunits. Detects stalled/collided 70S ribosomes which it binds and splits by an ATP-hydrolysis driven conformational change. Acts upstream of the ribosome quality control system (RQC), a ribosome-associated complex that mediates the extraction of incompletely synthesized nascent chains from stalled ribosomes and their subsequent degradation. Probably generates substrates for RQC. In Finegoldia magna (strain ATCC 29328 / DSM 20472 / WAL 2508) (Peptostreptococcus magnus), this protein is Endonuclease MutS2.